The sequence spans 143 residues: Putative glycerol transporter Lin0368 (143 aa).

Transmembrane regions (helical) follow at residues 6 to 26, 27 to 47, 60 to 80, and 90 to 110; these read GMIG…PLAE, NYGI…MWFM, AAFV…DVFM, and LPTI…AAAI. Residues 118–143 are disordered; sequence HEAKQEKTEPGMNIKEEERLNENQLV.

It localises to the membrane. Could be involved in the glycerol uptake either via facilitated diffusion or active transport. This chain is Putative glycerol transporter Lin0368, found in Listeria innocua serovar 6a (strain ATCC BAA-680 / CLIP 11262).